The primary structure comprises 217 residues: Rhicadhesin receptor (217 aa).

Residues 1–20 (MKLIAVLLLVVLATATTATA) form the signal peptide. Cysteines 30 and 45 form a disulfide. N-linked (GlcNAc...) asparagine glycosylation is found at asparagine 50 and asparagine 68. The Cupin type-1 domain occupies 58 to 207 (SNLLVKQGAT…AFQIGTKEVQ (150 aa)). Positions 107, 109, 114, and 153 each coordinate Mn(2+).

It belongs to the germin family. In terms of processing, glycosylated.

The protein localises to the secreted. Its subcellular location is the extracellular space. It is found in the apoplast. It localises to the cell wall. In terms of biological role, putative receptor for bacterial rhicadhesin, an attachment protein of rhizobiaceae. The chain is Rhicadhesin receptor (GER1) from Pisum sativum (Garden pea).